Consider the following 532-residue polypeptide: 2-isopropylmalate synthase (532 aa).

In terms of domain architecture, Pyruvate carboxyltransferase spans 5–267 (VIIFDTTLRD…HTNINHQEIY (263 aa)). 4 residues coordinate Mn(2+): Asp14, His202, His204, and Asn238. Residues 392–532 (HLDYFSVQSG…SKQQNSQETV (141 aa)) are regulatory domain. Positions 513-532 (QQHNNQQQNDSKQQNSQETV) are disordered.

Belongs to the alpha-IPM synthase/homocitrate synthase family. LeuA type 1 subfamily. In terms of assembly, homodimer. The cofactor is Mn(2+).

The protein resides in the cytoplasm. It catalyses the reaction 3-methyl-2-oxobutanoate + acetyl-CoA + H2O = (2S)-2-isopropylmalate + CoA + H(+). Its pathway is amino-acid biosynthesis; L-leucine biosynthesis; L-leucine from 3-methyl-2-oxobutanoate: step 1/4. Functionally, catalyzes the condensation of the acetyl group of acetyl-CoA with 3-methyl-2-oxobutanoate (2-ketoisovalerate) to form 3-carboxy-3-hydroxy-4-methylpentanoate (2-isopropylmalate). The chain is 2-isopropylmalate synthase from Pectobacterium atrosepticum (strain SCRI 1043 / ATCC BAA-672) (Erwinia carotovora subsp. atroseptica).